A 438-amino-acid chain; its full sequence is Methylenetetrahydrofolate--tRNA-(uracil-5-)-methyltransferase TrmFO (438 aa).

Position 9 to 14 (9 to 14 (GGGLAG)) interacts with FAD.

The protein belongs to the MnmG family. TrmFO subfamily. FAD serves as cofactor.

Its subcellular location is the cytoplasm. The enzyme catalyses uridine(54) in tRNA + (6R)-5,10-methylene-5,6,7,8-tetrahydrofolate + NADH + H(+) = 5-methyluridine(54) in tRNA + (6S)-5,6,7,8-tetrahydrofolate + NAD(+). It carries out the reaction uridine(54) in tRNA + (6R)-5,10-methylene-5,6,7,8-tetrahydrofolate + NADPH + H(+) = 5-methyluridine(54) in tRNA + (6S)-5,6,7,8-tetrahydrofolate + NADP(+). Functionally, catalyzes the folate-dependent formation of 5-methyl-uridine at position 54 (M-5-U54) in all tRNAs. The sequence is that of Methylenetetrahydrofolate--tRNA-(uracil-5-)-methyltransferase TrmFO from Lactobacillus gasseri (strain ATCC 33323 / DSM 20243 / BCRC 14619 / CIP 102991 / JCM 1131 / KCTC 3163 / NCIMB 11718 / NCTC 13722 / AM63).